The sequence spans 335 residues: Lipase chaperone (335 aa).

A helical membrane pass occupies residues 1-21; sequence MSGSILLLPLAIALGLGFFIA.

It belongs to the lipase chaperone family.

Its subcellular location is the cell inner membrane. Functionally, may be involved in the folding of the extracellular lipase during its passage through the periplasm. The polypeptide is Lipase chaperone (Stutzerimonas stutzeri (strain A1501) (Pseudomonas stutzeri)).